The chain runs to 109 residues: FAD assembly factor SdhE (109 aa).

The tract at residues Met1–Asp22 is disordered. A compositionally biased stretch (low complexity) spans Ala7–Ser17.

Belongs to the SdhE FAD assembly factor family.

The protein resides in the cytoplasm. In terms of biological role, an FAD assembly protein, which accelerates covalent attachment of the cofactor into other proteins. Plays an essential role in the assembly of succinate dehydrogenase (SDH, respiratory complex II), an enzyme complex that is a component of both the tricarboxylic acid cycle and the electron transport chain, and which couples the oxidation of succinate to fumarate with the reduction of ubiquinone (coenzyme Q) to ubiquinol. Required for flavinylation of SdhA, when the SDH operon and this gene are overexpressed in G.oxydans. Flavinylation of SdhA is detected only in the presence of sdhE. This Acetobacter pasteurianus (strain NBRC 105184 / IFO 3283-01) protein is FAD assembly factor SdhE.